Reading from the N-terminus, the 117-residue chain is Protein YchN (117 aa).

To M.jannaschii MJ0989. Homohexamer. The hexamer is formed by a dimer of trimers.

The protein is Protein YchN (ychN) of Escherichia coli O157:H7.